The chain runs to 199 residues: Elongation factor Ts (199 aa).

The segment at 82 to 85 is involved in Mg(2+) ion dislocation from EF-Tu; sequence TDFV.

It belongs to the EF-Ts family.

It is found in the cytoplasm. Functionally, associates with the EF-Tu.GDP complex and induces the exchange of GDP to GTP. It remains bound to the aminoacyl-tRNA.EF-Tu.GTP complex up to the GTP hydrolysis stage on the ribosome. The sequence is that of Elongation factor Ts from Leptospira borgpetersenii serovar Hardjo-bovis (strain JB197).